A 200-amino-acid chain; its full sequence is RNA polymerase I-specific transcription initiation factor rrn11 (200 aa).

The protein localises to the nucleus. Subunit of a multiprotein complex essential for the initiation of rDNA transcription by RNA polymerase I. Binding to the DNA template is dependent on the initial binding of other factors. The chain is RNA polymerase I-specific transcription initiation factor rrn11 (rrn11) from Schizosaccharomyces pombe (strain 972 / ATCC 24843) (Fission yeast).